Here is a 178-residue protein sequence, read N- to C-terminus: Orotate phosphoribosyltransferase (178 aa).

5-phospho-alpha-D-ribose 1-diphosphate contacts are provided by residues Arg92, Lys93, Lys96, and 118 to 126; that span reads EDVITTGSS. Thr122 and Arg150 together coordinate orotate.

This sequence belongs to the purine/pyrimidine phosphoribosyltransferase family. PyrE subfamily. In terms of assembly, homodimer. The cofactor is Mg(2+).

It catalyses the reaction orotidine 5'-phosphate + diphosphate = orotate + 5-phospho-alpha-D-ribose 1-diphosphate. It functions in the pathway pyrimidine metabolism; UMP biosynthesis via de novo pathway; UMP from orotate: step 1/2. In terms of biological role, catalyzes the transfer of a ribosyl phosphate group from 5-phosphoribose 1-diphosphate to orotate, leading to the formation of orotidine monophosphate (OMP). The polypeptide is Orotate phosphoribosyltransferase (Archaeoglobus fulgidus (strain ATCC 49558 / DSM 4304 / JCM 9628 / NBRC 100126 / VC-16)).